Here is a 365-residue protein sequence, read N- to C-terminus: Decapping nuclease RAI1 (365 aa).

Glu165 lines the a divalent metal cation pocket. Residues Cys197 and Glu214 each coordinate substrate. A divalent metal cation-binding residues include Asp216, Glu234, and Leu235. Substrate contacts are provided by Lys236 and Gln260.

It belongs to the DXO/Dom3Z family. In terms of assembly, interacts with rat1; the interaction is direct, stabilizes rat1 protein structure and stimulates its exoribonuclease activity. The interaction also stimulates rai1 pyrophosphohydrolase activity, probably by recruiting it to mRNA substrates. It depends on a divalent metal cation as a cofactor.

The protein resides in the nucleus. The enzyme catalyses a 5'-end NAD(+)-phospho-ribonucleoside in mRNA + H2O = a 5'-end phospho-ribonucleoside in mRNA + NAD(+) + H(+). The catalysed reaction is a 5'-end (N(7)-methyl 5'-triphosphoguanosine)-ribonucleoside-ribonucleotide in mRNA + H2O = a (N(7)-methyl 5'-triphosphoguanosine)-nucleoside + a 5'-end phospho-ribonucleoside in mRNA + H(+). It catalyses the reaction a 5'-end triphospho-ribonucleoside in mRNA + H2O = a 5'-end phospho-ribonucleoside in mRNA + diphosphate + H(+). In terms of biological role, decapping enzyme for NAD-capped RNAs: specifically hydrolyzes the nicotinamide adenine dinucleotide (NAD) cap from a subset of RNAs by removing the entire NAD moiety from the 5'-end of an NAD-capped RNA. The NAD-cap is present at the 5'-end of some RNAs and snoRNAs. In contrast to the canonical 5'-end N7 methylguanosine (m7G) cap, the NAD cap promotes mRNA decay. Also acts as a non-canonical decapping enzyme that removes the entire cap structure of m7G capped or incompletely capped RNAs. Has decapping activity toward incomplete 5'-end m7G cap mRNAs such as unmethylated 5'-end-capped RNA (cap0), while it has no activity toward 2'-O-ribose methylated m7G cap (cap1). Also possesses RNA 5'-pyrophosphohydrolase activity by hydrolyzing the 5'-end triphosphate to release pyrophosphates. Stimulates exoribonuclease activity of Rat1, allowing it to degrade RNAs with stable secondary structure more effectively. This chain is Decapping nuclease RAI1 (rai1), found in Aspergillus fumigatus (strain ATCC MYA-4609 / CBS 101355 / FGSC A1100 / Af293) (Neosartorya fumigata).